A 691-amino-acid polypeptide reads, in one-letter code: Dipeptidyl peptidase 3 (691 aa).

Histidine 431 is a binding site for Zn(2+). Glutamate 432 is a catalytic residue. Zn(2+) is bound by residues histidine 436 and glutamate 492.

The protein belongs to the peptidase M49 family. It depends on Zn(2+) as a cofactor.

The protein resides in the cytoplasm. It carries out the reaction Release of an N-terminal dipeptide from a peptide comprising four or more residues, with broad specificity. Also acts on dipeptidyl 2-naphthylamides.. In Dictyostelium discoideum (Social amoeba), this protein is Dipeptidyl peptidase 3 (dpp3-1).